Reading from the N-terminus, the 129-residue chain is uncharacterized protein (129 aa).

Residues 103 to 125 form a helical membrane-spanning segment; the sequence is AISSAFQYGLSTSNFFFIFLYIF.

The protein resides in the membrane. This is an uncharacterized protein from Acanthamoeba polyphaga (Amoeba).